We begin with the raw amino-acid sequence, 143 residues long: P840 reaction center 17 kDa protein (143 aa).

Residues 1-23 (MQPQLSRPQTATNQVRNSVSGPW) show a composition bias toward polar residues. The interval 1–25 (MQPQLSRPQTATNQVRNSVSGPWSG) is disordered.

As to quaternary structure, component of the P840 reaction center.

The polypeptide is P840 reaction center 17 kDa protein (pscD) (Chlorobaculum thiosulfatiphilum (Chlorobium limicola f.sp. thiosulfatophilum)).